The sequence spans 448 residues: Phosphoglucosamine mutase (448 aa).

S100 serves as the catalytic Phosphoserine intermediate. Mg(2+) contacts are provided by S100, D240, D242, and D244. At S100 the chain carries Phosphoserine.

The protein belongs to the phosphohexose mutase family. Mg(2+) is required as a cofactor. In terms of processing, activated by phosphorylation.

The catalysed reaction is alpha-D-glucosamine 1-phosphate = D-glucosamine 6-phosphate. Catalyzes the conversion of glucosamine-6-phosphate to glucosamine-1-phosphate. The polypeptide is Phosphoglucosamine mutase (Bacillus cereus (strain G9842)).